A 1133-amino-acid chain; its full sequence is Guanine nucleotide-binding protein G(s) subunit alpha isoforms XLas (1133 aa).

Disordered regions lie at residues 1–195 (MGMF…PEAL), 322–552 (DDTA…VPGA), 611–648 (SASAAPSRAHLRPPSPEIQVADPPTPRPPPRPTAWPDK), and 724–744 (RSRSLSPGKAKDPMEERRKQM). Over residues 31–48 (LEAPGAAAPGAGAGPAEE) the composition is skewed to low complexity. The span at 347-362 (DKSECAERPPVEREAA) shows a compositional bias: basic and acidic residues. Low complexity-rich tracts occupy residues 391–404 (PEAMDAKPAPAAQA), 459–471 (GGAAPVAPATPAE), 482–498 (AEPASEAVPATTAESAS), 515–525 (ATLAEPAARAA), and 535–552 (RAVPSARAHPAAGAVPGA). Over residues 633–643 (PPTPRPPPRPT) the composition is skewed to pro residues. The segment covering 732-744 (KAKDPMEERRKQM) has biased composition (basic and acidic residues). Positions 737–761 (MEERRKQMRKEAIEMREQKRADKKR) form a coiled coil. The G-alpha domain maps to 778–1133 (CTHRLLLLGA…RMHLRQYELL (356 aa)). A G1 motif region spans residues 781 to 794 (RLLLLGAGESGKST). Residue 786–794 (GAGESGKST) participates in GTP binding. Ser793 is a Mg(2+) binding site. Residues 807-828 (FNGEGGEEDPQAARSNSDGEKA) form a disordered region. Residues 935–943 (DLLRCRVLT) form a G2 motif region. GTP-binding positions include 936–943 (LLRCRVLT), 962–966 (DVGGQ), and 1031–1034 (NKQD). An ADP-ribosylarginine; by cholera toxin modification is found at Arg940. Thr943 is a Mg(2+) binding site. Residues 958-967 (FHMFDVGGQR) are G3 motif. The segment at 1027–1034 (ILFLNKQD) is G4 motif. Ser1091 is modified (phosphoserine). The G5 motif stretch occupies residues 1103-1108 (TCAVDT). Ala1105 contacts GTP.

It belongs to the G-alpha family. G(s) subfamily. G proteins are composed of 3 units; alpha, beta and gamma. The alpha chain contains the guanine nucleotide binding site. Interacts through its N-terminal region with ALEX which is produced from the same locus in a different open reading frame. This interaction may inhibit its adenylyl cyclase-stimulating activity. Interacts with MAGED2.

The protein resides in the cell membrane. Its subcellular location is the apical cell membrane. The catalysed reaction is GTP + H2O = GDP + phosphate + H(+). Functionally, guanine nucleotide-binding proteins (G proteins) function as transducers in numerous signaling pathways controlled by G protein-coupled receptors (GPCRs). The alpha chain contains the guanine nucleotide binding site and alternates between an active, GTP-bound state and an inactive, GDP-bound state. Signaling by an activated GPCR promotes GDP release and GTP binding. The alpha subunit has a low GTPase activity that converts bound GTP to GDP, thereby terminating the signal. Both GDP release and GTP hydrolysis are modulated by numerous regulatory proteins. Signaling involves the activation of adenylyl cyclases, resulting in increased levels of the signaling molecule cAMP. GNAS functions downstream of several GPCRs, including beta-adrenergic receptors. XLas isoforms interact with the same set of receptors as Gnas isoforms. The protein is Guanine nucleotide-binding protein G(s) subunit alpha isoforms XLas of Mus musculus (Mouse).